Here is a 145-residue protein sequence, read N- to C-terminus: MIIDITEIMDWIPHRYPFLLVDRVLKIDPNKSITGIKNVTVNEPQFTGHFPARPVMPGVLMVEAMAQLAAILVAKSLGSTKNKEVFLMAIENAKFRRIVQPGDTMHIHVVIDQQRANVWKFSSTVTVEGEIAAESKFTAMIKDKA.

Residue His49 is part of the active site.

It belongs to the thioester dehydratase family. FabZ subfamily.

It is found in the cytoplasm. It carries out the reaction a (3R)-hydroxyacyl-[ACP] = a (2E)-enoyl-[ACP] + H2O. Functionally, involved in unsaturated fatty acids biosynthesis. Catalyzes the dehydration of short chain beta-hydroxyacyl-ACPs and long chain saturated and unsaturated beta-hydroxyacyl-ACPs. This chain is 3-hydroxyacyl-[acyl-carrier-protein] dehydratase FabZ, found in Rickettsia massiliae (strain Mtu5).